The primary structure comprises 328 residues: Glycerol-3-phosphate dehydrogenase [NAD(P)+] (328 aa).

Residues Trp11, Arg30, and Lys103 each coordinate NADPH. Sn-glycerol 3-phosphate is bound by residues Lys103, Gly132, and Ser134. Residue Ala136 coordinates NADPH. The sn-glycerol 3-phosphate site is built by Lys187, Asp240, Ser250, Arg251, and Asn252. The active-site Proton acceptor is the Lys187. Residue Arg251 participates in NADPH binding. NADPH is bound by residues Val275 and Glu277.

This sequence belongs to the NAD-dependent glycerol-3-phosphate dehydrogenase family.

It is found in the cytoplasm. It carries out the reaction sn-glycerol 3-phosphate + NAD(+) = dihydroxyacetone phosphate + NADH + H(+). The catalysed reaction is sn-glycerol 3-phosphate + NADP(+) = dihydroxyacetone phosphate + NADPH + H(+). It functions in the pathway membrane lipid metabolism; glycerophospholipid metabolism. In terms of biological role, catalyzes the reduction of the glycolytic intermediate dihydroxyacetone phosphate (DHAP) to sn-glycerol 3-phosphate (G3P), the key precursor for phospholipid synthesis. The sequence is that of Glycerol-3-phosphate dehydrogenase [NAD(P)+] from Thiobacillus denitrificans (strain ATCC 25259 / T1).